The following is a 1020-amino-acid chain: Calcium-transporting ATPase 10, plasma membrane-type (1020 aa).

Residues 1–175 are Cytoplasmic-facing; sequence MESYLEENFG…FVWEALQDTT (175 aa). An interaction with calmodulin region spans residues 21-32; it reads ALRRWRKLCGVV. Helical transmembrane passes span 176-196 and 199-219; these read LIILAVCAFVSLVVGIAMEGW and GAHDGLGIVASILLVVFVTAT. The Cytoplasmic portion of the chain corresponds to 220 to 263; the sequence is SDYRQSLQFKDLDKEKKKIQVQVTRNGFRQRLSIYDLLPGDVVH. A run of 2 helical transmembrane segments spans residues 264 to 284 and 352 to 372; these read LAIGDQVPADGLFISGFSLLI and GVATIIGKIGLFFAVITFIVL. Residues 373 to 400 lie on the Cytoplasmic side of the membrane; that stretch reads SQGLISKKYHEGLLLSWSGDDALEMLEH. The helical transmembrane segment at 401-421 threads the bilayer; it reads FAIAVTIVVVAVPEGLPLAVT. The active-site 4-aspartylphosphate intermediate is Asp456. Mg(2+) is bound by residues Asp758 and Asp762. The helical transmembrane segment at 843–863 threads the bilayer; it reads LTAVQLLWVNMIMDTLGALAL. At 864–887 the chain is on the cytoplasmic side; the sequence is ATEPPNDDLMKREPVGRTGKFITN. Helical transmembrane passes span 888-907 and 924-944; these read VMWRNILGQSFYQFIVMWYL and VVLNTIIFNSFVFCQVFNEIS. Residues 945–961 lie on the Cytoplasmic side of the membrane; sequence SREMEKINVLRGILKNY. A run of 2 helical transmembrane segments spans residues 962-982 and 995-1015; these read VFLGVLTSTVVFQFIMVQFLG and WIASVLLGLIGMPISAIIKLL. The Cytoplasmic portion of the chain corresponds to 1016 to 1020; that stretch reads PVGSS.

This sequence belongs to the cation transport ATPase (P-type) (TC 3.A.3) family. Type IIB subfamily.

It localises to the membrane. The catalysed reaction is Ca(2+)(in) + ATP + H2O = Ca(2+)(out) + ADP + phosphate + H(+). With respect to regulation, activated by calmodulin. This magnesium-dependent enzyme catalyzes the hydrolysis of ATP coupled with the translocation of calcium from the cytosol out of the cell, into the endoplasmic reticulum, or into organelles. The protein is Calcium-transporting ATPase 10, plasma membrane-type of Oryza sativa subsp. japonica (Rice).